Here is a 466-residue protein sequence, read N- to C-terminus: 3-isopropylmalate dehydratase large subunit (466 aa).

Residues cysteine 349, cysteine 410, and cysteine 413 each contribute to the [4Fe-4S] cluster site.

It belongs to the aconitase/IPM isomerase family. LeuC type 1 subfamily. As to quaternary structure, heterodimer of LeuC and LeuD. Requires [4Fe-4S] cluster as cofactor.

It carries out the reaction (2R,3S)-3-isopropylmalate = (2S)-2-isopropylmalate. The protein operates within amino-acid biosynthesis; L-leucine biosynthesis; L-leucine from 3-methyl-2-oxobutanoate: step 2/4. Its function is as follows. Catalyzes the isomerization between 2-isopropylmalate and 3-isopropylmalate, via the formation of 2-isopropylmaleate. In Vesicomyosocius okutanii subsp. Calyptogena okutanii (strain HA), this protein is 3-isopropylmalate dehydratase large subunit.